Reading from the N-terminus, the 300-residue chain is 33 kDa chaperonin (300 aa).

Intrachain disulfides connect C235/C237 and C269/C272.

It belongs to the HSP33 family. In terms of processing, under oxidizing conditions two disulfide bonds are formed involving the reactive cysteines. Under reducing conditions zinc is bound to the reactive cysteines and the protein is inactive.

The protein localises to the cytoplasm. In terms of biological role, redox regulated molecular chaperone. Protects both thermally unfolding and oxidatively damaged proteins from irreversible aggregation. Plays an important role in the bacterial defense system toward oxidative stress. The polypeptide is 33 kDa chaperonin (Pseudomonas fluorescens (strain Pf0-1)).